A 392-amino-acid chain; its full sequence is Speckle-type POZ protein-like (392 aa).

The MATH domain occupies 31–161 (KFSYMWTINN…DDKLTLYCEV (131 aa)). Positions 200-267 (TDCSLFVEGK…IYTGGTPHVD (68 aa)) constitute a BTB domain.

It belongs to the Tdpoz family. As to quaternary structure, homodimer. Heterodimer with SPOP. Component of cullin-RING-based BCR (BTB-CUL3-RBX1) E3 ubiquitin-protein ligase complexes containing homodimeric SPOPL or the heterodimer formed by SPOP and SPOPL.

The protein localises to the nucleus. It functions in the pathway protein modification; protein ubiquitination. Functionally, component of a cullin-RING-based BCR (BTB-CUL3-RBX1) E3 ubiquitin-protein ligase complex that mediates the ubiquitination and subsequent proteasomal degradation of target proteins, but with relatively low efficiency. This Xenopus laevis (African clawed frog) protein is Speckle-type POZ protein-like (spopl).